The primary structure comprises 125 residues: Protein MGF 360-9L (125 aa).

It belongs to the asfivirus MGF 360 family. In terms of assembly, interacts with host STAT1; this interaction mediates STAT1 degradation through apoptosis. Interacts with host STAT2; this interaction mediates STAT2 degradation through the proteasome.

It is found in the host cytoplasm. Functionally, plays a role in virus cell tropism, and may be required for efficient virus replication in macrophages. In addition, inhibits IFN-beta-induced IFN-stimulated genes (ISGs) transcription. Mechanistically, degrades host STAT1 and STAT2 through apoptosis and ubiquitin-proteasome pathways respectively. This is Protein MGF 360-9L from African swine fever virus (strain Badajoz 1971 Vero-adapted) (Ba71V).